The chain runs to 216 residues: Uracil phosphoribosyltransferase (216 aa).

GTP-binding positions include R32, R41, 75–78 (MGKI), and K77. Position 82 is a phosphoserine (S82). R85 is a 5-phospho-alpha-D-ribose 1-diphosphate binding site. A GTP-binding site is contributed by R102. R110 serves as a coordination point for 5-phospho-alpha-D-ribose 1-diphosphate. Position 131 (R131) interacts with GTP. 5-phospho-alpha-D-ribose 1-diphosphate-binding positions include D137 and 137-145 (DPMLATGGS). Y201 serves as a coordination point for D-ribose 5-phosphate. Uracil contacts are provided by residues L202 and 207–209 (GDF). Position 208 (D208) interacts with 5-phospho-alpha-D-ribose 1-diphosphate.

It belongs to the UPRTase family. Mg(2+) is required as a cofactor.

The enzyme catalyses UMP + diphosphate = 5-phospho-alpha-D-ribose 1-diphosphate + uracil. Its pathway is pyrimidine metabolism; UMP biosynthesis via salvage pathway; UMP from uracil: step 1/1. Its activity is regulated as follows. Allosterically activated by GTP. Its function is as follows. Catalyzes the conversion of uracil and 5-phospho-alpha-D-ribose 1-diphosphate (PRPP) to UMP and diphosphate in the pyrimidine salvage pathway. This is Uracil phosphoribosyltransferase (FUR1) from Saccharomyces cerevisiae (strain ATCC 204508 / S288c) (Baker's yeast).